We begin with the raw amino-acid sequence, 881 residues long: Alanine--tRNA ligase (881 aa).

H566, H570, C668, and H672 together coordinate Zn(2+).

This sequence belongs to the class-II aminoacyl-tRNA synthetase family. It depends on Zn(2+) as a cofactor.

It localises to the cytoplasm. It carries out the reaction tRNA(Ala) + L-alanine + ATP = L-alanyl-tRNA(Ala) + AMP + diphosphate. Functionally, catalyzes the attachment of alanine to tRNA(Ala) in a two-step reaction: alanine is first activated by ATP to form Ala-AMP and then transferred to the acceptor end of tRNA(Ala). Also edits incorrectly charged Ser-tRNA(Ala) and Gly-tRNA(Ala) via its editing domain. This Frankia casuarinae (strain DSM 45818 / CECT 9043 / HFP020203 / CcI3) protein is Alanine--tRNA ligase.